Reading from the N-terminus, the 56-residue chain is Large ribosomal subunit protein bL32 (56 aa).

The segment at M1 to Q26 is disordered. A compositionally biased stretch (basic residues) spans K7–R16.

The protein belongs to the bacterial ribosomal protein bL32 family.

In Shewanella amazonensis (strain ATCC BAA-1098 / SB2B), this protein is Large ribosomal subunit protein bL32.